An 86-amino-acid polypeptide reads, in one-letter code: Anti-adapter protein IraP (86 aa).

Residues 1 to 47 adopt a coiled-coil conformation; it reads MKNLIAELLLKLAQKEEESKELVAQVEALEIIVTAMLRNMAQSEQQM.

Belongs to the IraP family. Interacts with RssB.

Its subcellular location is the cytoplasm. Its function is as follows. Inhibits RpoS proteolysis by regulating RssB activity, thereby increasing the stability of the sigma stress factor RpoS especially during phosphate and magnesium starvation, but also in stationary phase and during nitrogen starvation. Its effect on RpoS stability is due to its interaction with RssB, which probably blocks the interaction of RssB with RpoS, and the consequent delivery of the RssB-RpoS complex to the ClpXP protein degradation pathway. The polypeptide is Anti-adapter protein IraP (Salmonella arizonae (strain ATCC BAA-731 / CDC346-86 / RSK2980)).